Here is a 331-residue protein sequence, read N- to C-terminus: MVSYKEAGVNIEEGYKSVDLIKKHASKTFTKGVLNNLGSFAGMFELPKYKNPVLVSGTDGVGTKLDIAFRMKKYNTVGIDCVAMCVNDILCHGAKPLFFLDYIACGKLESEIAAQLVEGVSNGCIQSECALIGGETAEMPGFYRDGEYDIAGFAVGIAEKDEIIDGSKIEDGDILIGIASSGPHSNGYSLIRKLVEDLHKDFEGNKIGNTLLTPTKIYVKPVMKLLEKYNIKGMAHVTGGGFYENIPRMFKEDFTAVINKKSYPLPNIFSHLMSLGIEEDHMYNTFNMGIGFVLCVNEKDGENIIKDLIEMGEKGYKIGYVKKGDKSVELI.

Belongs to the AIR synthase family.

The protein resides in the cytoplasm. The enzyme catalyses 2-formamido-N(1)-(5-O-phospho-beta-D-ribosyl)acetamidine + ATP = 5-amino-1-(5-phospho-beta-D-ribosyl)imidazole + ADP + phosphate + H(+). The protein operates within purine metabolism; IMP biosynthesis via de novo pathway; 5-amino-1-(5-phospho-D-ribosyl)imidazole from N(2)-formyl-N(1)-(5-phospho-D-ribosyl)glycinamide: step 2/2. This is Phosphoribosylformylglycinamidine cyclo-ligase from Clostridium botulinum (strain Okra / Type B1).